The following is a 1254-amino-acid chain: DNA-directed RNA polymerase subunit beta (1254 aa).

Belongs to the RNA polymerase beta chain family. As to quaternary structure, the RNAP catalytic core consists of 2 alpha, 1 beta, 1 beta' and 1 omega subunit. When a sigma factor is associated with the core the holoenzyme is formed, which can initiate transcription.

The enzyme catalyses RNA(n) + a ribonucleoside 5'-triphosphate = RNA(n+1) + diphosphate. Its function is as follows. DNA-dependent RNA polymerase catalyzes the transcription of DNA into RNA using the four ribonucleoside triphosphates as substrates. The chain is DNA-directed RNA polymerase subunit beta from Protochlamydia amoebophila (strain UWE25).